A 205-amino-acid chain; its full sequence is RPW8-like protein 2 (205 aa).

The RPW8 domain occupies 1–153 (MPLTEIIAGA…IMGQPIDCII (153 aa)). Residues 7 to 23 (IAGAALGLALQILHEAI) traverse the membrane as a helical segment. 2 coiled-coil regions span residues 70–92 (EDLK…LKRR) and 125–147 (ADIK…IMGQ).

Belongs to the plant RPW8 protein family.

It is found in the membrane. Its function is as follows. Probable disease resistance (R) protein. The sequence is that of RPW8-like protein 2 from Arabidopsis thaliana (Mouse-ear cress).